The primary structure comprises 396 residues: 1-deoxy-D-xylulose 5-phosphate reductoisomerase (396 aa).

NADPH is bound by residues Thr13, Gly14, Ser15, Val16, and Asn127. Residue Lys128 participates in 1-deoxy-D-xylulose 5-phosphate binding. Glu129 is a binding site for NADPH. Asp153 lines the Mn(2+) pocket. Positions 154, 155, 184, and 207 each coordinate 1-deoxy-D-xylulose 5-phosphate. Mn(2+) is bound at residue Glu155. Gly213 provides a ligand contact to NADPH. 1-deoxy-D-xylulose 5-phosphate-binding residues include Ser220, Asn225, Lys226, and Glu229. Glu229 lines the Mn(2+) pocket.

It belongs to the DXR family. Mg(2+) serves as cofactor. It depends on Mn(2+) as a cofactor.

It catalyses the reaction 2-C-methyl-D-erythritol 4-phosphate + NADP(+) = 1-deoxy-D-xylulose 5-phosphate + NADPH + H(+). The protein operates within isoprenoid biosynthesis; isopentenyl diphosphate biosynthesis via DXP pathway; isopentenyl diphosphate from 1-deoxy-D-xylulose 5-phosphate: step 1/6. Catalyzes the NADPH-dependent rearrangement and reduction of 1-deoxy-D-xylulose-5-phosphate (DXP) to 2-C-methyl-D-erythritol 4-phosphate (MEP). This Pseudomonas fluorescens (strain SBW25) protein is 1-deoxy-D-xylulose 5-phosphate reductoisomerase.